The primary structure comprises 98 residues: Defensin-A (98 aa).

A signal peptide spans 1–18 (MKSITVICFLALCTVAIT). Residues 19–58 (SAYPQEPVLADEARPFANSLFDELPEETYQAAVENFRLKR) constitute a propeptide that is removed on maturation. Intrachain disulfides connect C61-C88, C74-C94, and C78-C96.

The protein belongs to the invertebrate defensin family. Type 1 subfamily.

The protein localises to the secreted. In terms of biological role, antibacterial peptide mostly active against Gram-positive bacteria. Has activity against the bacteria Gram-negative E.cloacae beta12. The chain is Defensin-A (DEFA) from Aedes aegypti (Yellowfever mosquito).